Reading from the N-terminus, the 228-residue chain is Probable octanoyltransferase (228 aa).

In terms of domain architecture, BPL/LPL catalytic spans 27 to 198 (SGGDDAFILV…AFEEVFEAKV (172 aa)). Substrate contacts are provided by residues 65–72 (RGGDATYH), 129–131 (SIG), and 142–144 (GVA). Cys160 serves as the catalytic Acyl-thioester intermediate.

Belongs to the LipB family.

It is found in the cytoplasm. It catalyses the reaction octanoyl-[ACP] + L-lysyl-[protein] = N(6)-octanoyl-L-lysyl-[protein] + holo-[ACP] + H(+). It participates in protein modification; protein lipoylation via endogenous pathway; protein N(6)-(lipoyl)lysine from octanoyl-[acyl-carrier-protein]: step 1/2. Its function is as follows. Catalyzes the transfer of endogenously produced octanoic acid from octanoyl-acyl-carrier-protein onto the lipoyl domains of lipoate-dependent enzymes. Lipoyl-ACP can also act as a substrate although octanoyl-ACP is likely to be the physiological substrate. The protein is Probable octanoyltransferase of Pyrobaculum calidifontis (strain DSM 21063 / JCM 11548 / VA1).